We begin with the raw amino-acid sequence, 1288 residues long: Structural maintenance of chromosomes protein 4 (1288 aa).

A compositionally biased stretch (polar residues) spans 1 to 10 (MPRKGTQPST). A disordered region spans residues 1–55 (MPRKGTQPSTARRREEGPPPPSPDGASSDAEPEPPSGRTESPATAAETASEELDN). Ser22 and Ser28 each carry phosphoserine. At Thr39 the chain carries Phosphothreonine. Positions 39 to 48 (TESPATAAET) are enriched in low complexity. Residues Ser41 and Ser50 each carry the phosphoserine modification. 113–120 (GPNGSGKS) contributes to the ATP binding site. At Ser143 the chain carries Phosphoserine. Residues 272-588 (RRVEILNEHR…LFQKVEEAKS (317 aa)) adopt a coiled-coil conformation. An N6-acetyllysine mark is found at Lys381 and Lys679. The SMC hinge domain maps to 613–727 (PGIYGRLGDL…ADNLDQATRV (115 aa)). Residues 767-1020 (LVIEISEEEV…ALSIKLKLEQ (254 aa)) adopt a coiled-coil conformation. A phosphoserine mark is found at Ser982 and Ser1056. Residues 1109–1129 (ELDKITYERDSFRQAYEDLRK) are a coiled coil.

This sequence belongs to the SMC family. SMC4 subfamily. As to quaternary structure, forms a heterodimer with SMC2. Component of the condensin complex, which contains the SMC2 and SMC4 heterodimer, and three non SMC subunits that probably regulate the complex: BRRN1/CAPH, CNAP1/CAPD2 and CAPG. As to expression, widely expressed. Higher expression in testis, colon, thymus.

The protein localises to the nucleus. The protein resides in the cytoplasm. It localises to the chromosome. In terms of biological role, central component of the condensin complex, a complex required for conversion of interphase chromatin into mitotic-like condense chromosomes. The condensin complex probably introduces positive supercoils into relaxed DNA in the presence of type I topoisomerases and converts nicked DNA into positive knotted forms in the presence of type II topoisomerases. The polypeptide is Structural maintenance of chromosomes protein 4 (SMC4) (Homo sapiens (Human)).